The sequence spans 265 residues: Synaptoporin (265 aa).

Topologically, residues 1–4 (MCMV) are cytoplasmic. Residues 1-202 (MCMVIFAPLF…NIWFVFKETG (202 aa)) form the MARVEL domain. A helical transmembrane segment spans residues 5–25 (IFAPLFAIFAFATCGGYSGGL). At 26 to 81 (RLSVDCVNKTESNLSIDIAFAYPFRLHQVTFEVPTCEGKERQKLALIGDSSSSAEF) the chain is on the vesicular side. N-linked (GlcNAc...) asparagine glycosylation is found at Asn33 and Asn38. Residues 82 to 102 (FVTVAVFAFLYSLAATVVYIF) form a helical membrane-spanning segment. The Cytoplasmic portion of the chain corresponds to 103–114 (FQNKYRENNRGP). The helical transmembrane segment at 115–135 (LIDFIVTVVFSFLWLVGSSAW) threads the bilayer. At 136–177 (AKGLSDVKVATDPKEVLLLMSACKQPSNKCMAIHSPVMSSLN) the chain is on the vesicular side. The chain crosses the membrane as a helical span at residues 178 to 198 (TSVVFGFLNFILWAGNIWFVF). The Cytoplasmic segment spans residues 199 to 265 (KETGWHSSGQ…TGPTSFTNQI (67 aa)). 5 tandem repeats follow at residues 210–214 (YLSDP), 222–226 (YNQGG), 227–231 (YNQDS), 232–236 (YGSSS), and 238–242 (YSQQA). The segment at 210–242 (YLSDPMEKHSSSYNQGGYNQDSYGSSSGYSQQA) is 5 X approximate repeats. At Ser212 the chain carries Phosphoserine. The interval 221-265 (SYNQGGYNQDSYGSSSGYSQQASLGPTSDEFGQQPTGPTSFTNQI) is disordered. Residues 224–243 (QGGYNQDSYGSSSGYSQQAS) are compositionally biased toward low complexity. A compositionally biased stretch (polar residues) spans 244–265 (LGPTSDEFGQQPTGPTSFTNQI).

This sequence belongs to the synaptophysin/synaptobrevin family.

It localises to the cytoplasmic vesicle. The protein localises to the secretory vesicle. Its subcellular location is the synaptic vesicle membrane. The protein resides in the synapse. It is found in the synaptosome. In terms of biological role, intrinsic membrane protein of small synaptic vesicles. Probable vesicular channel protein. This chain is Synaptoporin (SYNPR), found in Homo sapiens (Human).